A 121-amino-acid polypeptide reads, in one-letter code: Regulator of ribonuclease activity B (121 aa).

It belongs to the RraB family. As to quaternary structure, interacts with the C-terminal region of Rne.

It localises to the cytoplasm. Its function is as follows. Globally modulates RNA abundance by binding to RNase E (Rne) and regulating its endonucleolytic activity. Can modulate Rne action in a substrate-dependent manner by altering the composition of the degradosome. The polypeptide is Regulator of ribonuclease activity B (Psychromonas ingrahamii (strain DSM 17664 / CCUG 51855 / 37)).